The following is a 344-amino-acid chain: Sorting nexin-16 (344 aa).

Over residues 1 to 10 (MATPYVPVPM) the composition is skewed to pro residues. Disordered stretches follow at residues 1 to 66 (MATP…NTSS) and 81 to 107 (ASSI…EDRP). Residues 14–26 (NSASSFTTNRNQR) show a composition bias toward polar residues. Over residues 27–40 (SSSFGSVSTSSNSS) the composition is skewed to low complexity. Residues 41 to 66 (KGQLEDSNMGNFKQTSVPDQMDNTSS) are compositionally biased toward polar residues. Residues 105–218 (DRPSTPTILG…EFLCLDDPPG (114 aa)) enclose the PX domain. Residues arginine 144, threonine 146, and arginine 184 each coordinate a 1,2-diacyl-sn-glycero-3-phospho-(1D-myo-inositol-3-phosphate). Serine 222 is subject to Phosphoserine. A coiled-coil region spans residues 223–278 (LEESRAFCETLEETNYRLQKELLEKQKEMESLKKLLSEKQLHIDTLENRIRTLSLE).

It belongs to the sorting nexin family. Homooligomer. Interacts with EGFR. In terms of tissue distribution, detected in placenta, lung, liver,heart and pancreas.

It localises to the early endosome membrane. The protein resides in the late endosome membrane. Its subcellular location is the cytoplasm. The protein localises to the lysosome. In terms of biological role, may be involved in several stages of intracellular trafficking. Plays a role in protein transport from early to late endosomes. Plays a role in protein transport to the lysosome. Promotes degradation of EGFR after EGF signaling. Plays a role in intracellular transport of vesicular stomatitis virus nucleocapsids from the endosome to the cytoplasm. The protein is Sorting nexin-16 (SNX16) of Homo sapiens (Human).